The chain runs to 166 residues: MSEPTSRRPAYARLLDRAVRILAVRDHSEQELRRKLSAPVMGKNGPEEIDATADDYERVIAWCHEHHYLDDERFVMRFIASRSRKGYGPARICQELNQKGISRESTEKAMRECEIDWSEMAHEQAVRKYGEPLPSNFSEKVKVQRFLLYRGYLMDDIQQIWRNFAD.

Belongs to the RecX family.

It localises to the cytoplasm. Modulates RecA activity. This is Regulatory protein RecX from Salmonella choleraesuis (strain SC-B67).